A 193-amino-acid polypeptide reads, in one-letter code: Superoxide dismutase [Fe] (193 aa).

4 residues coordinate Fe cation: histidine 27, histidine 74, aspartate 157, and histidine 161.

The protein belongs to the iron/manganese superoxide dismutase family. Homodimer. The cofactor is Fe cation.

It catalyses the reaction 2 superoxide + 2 H(+) = H2O2 + O2. Destroys superoxide anion radicals which are normally produced within the cells and which are toxic to biological systems. In Salmonella typhimurium (strain LT2 / SGSC1412 / ATCC 700720), this protein is Superoxide dismutase [Fe] (sodB).